The primary structure comprises 259 residues: Deoxyribose-phosphate aldolase (259 aa).

Asp-102 serves as the catalytic Proton donor/acceptor. The active-site Schiff-base intermediate with acetaldehyde is Lys-167. Catalysis depends on Lys-201, which acts as the Proton donor/acceptor.

This sequence belongs to the DeoC/FbaB aldolase family. DeoC type 2 subfamily.

Its subcellular location is the cytoplasm. The catalysed reaction is 2-deoxy-D-ribose 5-phosphate = D-glyceraldehyde 3-phosphate + acetaldehyde. The protein operates within carbohydrate degradation; 2-deoxy-D-ribose 1-phosphate degradation; D-glyceraldehyde 3-phosphate and acetaldehyde from 2-deoxy-alpha-D-ribose 1-phosphate: step 2/2. Catalyzes a reversible aldol reaction between acetaldehyde and D-glyceraldehyde 3-phosphate to generate 2-deoxy-D-ribose 5-phosphate. The protein is Deoxyribose-phosphate aldolase of Cronobacter sakazakii (strain ATCC BAA-894) (Enterobacter sakazakii).